The chain runs to 386 residues: Succinate--CoA ligase [ADP-forming] subunit beta (386 aa).

The ATP-grasp domain occupies 9–244 (KELLKQFGVT…LDEEDPAEIE (236 aa)). Residues lysine 46, 53-55 (GRG), glutamate 99, alanine 102, and glutamate 107 contribute to the ATP site. The Mg(2+) site is built by asparagine 199 and aspartate 213. Residues asparagine 264 and 321–323 (GIM) contribute to the substrate site.

Belongs to the succinate/malate CoA ligase beta subunit family. Heterotetramer of two alpha and two beta subunits. It depends on Mg(2+) as a cofactor.

The enzyme catalyses succinate + ATP + CoA = succinyl-CoA + ADP + phosphate. It catalyses the reaction GTP + succinate + CoA = succinyl-CoA + GDP + phosphate. Its pathway is carbohydrate metabolism; tricarboxylic acid cycle; succinate from succinyl-CoA (ligase route): step 1/1. Its function is as follows. Succinyl-CoA synthetase functions in the citric acid cycle (TCA), coupling the hydrolysis of succinyl-CoA to the synthesis of either ATP or GTP and thus represents the only step of substrate-level phosphorylation in the TCA. The beta subunit provides nucleotide specificity of the enzyme and binds the substrate succinate, while the binding sites for coenzyme A and phosphate are found in the alpha subunit. This Bordetella pertussis (strain Tohama I / ATCC BAA-589 / NCTC 13251) protein is Succinate--CoA ligase [ADP-forming] subunit beta.